Reading from the N-terminus, the 204-residue chain is FMN-dependent NADH:quinone oxidoreductase (204 aa).

FMN-binding positions include Ser9, Ser15–Ser17, and Met97–Phe100.

Belongs to the azoreductase type 1 family. Homodimer. It depends on FMN as a cofactor.

It carries out the reaction 2 a quinone + NADH + H(+) = 2 a 1,4-benzosemiquinone + NAD(+). It catalyses the reaction N,N-dimethyl-1,4-phenylenediamine + anthranilate + 2 NAD(+) = 2-(4-dimethylaminophenyl)diazenylbenzoate + 2 NADH + 2 H(+). In terms of biological role, quinone reductase that provides resistance to thiol-specific stress caused by electrophilic quinones. Functionally, also exhibits azoreductase activity. Catalyzes the reductive cleavage of the azo bond in aromatic azo compounds to the corresponding amines. This Methylobacterium radiotolerans (strain ATCC 27329 / DSM 1819 / JCM 2831 / NBRC 15690 / NCIMB 10815 / 0-1) protein is FMN-dependent NADH:quinone oxidoreductase.